A 194-amino-acid polypeptide reads, in one-letter code: Ras-like protein RAS1 (194 aa).

Position 16–23 (16–23 (GAGGVGKS)) interacts with GTP. An Effector region motif is present at residues 38–46 (YDPTIEDSY). Residues 63–67 (DTAGQ) and 122–125 (NKVD) contribute to the GTP site. Cys191 is subject to Cysteine methyl ester. Cys191 carries S-geranylgeranyl cysteine lipidation. The propeptide at 192 to 194 (TLL) is removed in mature form.

It belongs to the small GTPase superfamily. Ras family.

It localises to the cell membrane. It catalyses the reaction GTP + H2O = GDP + phosphate + H(+). Its activity is regulated as follows. Alternates between an inactive form bound to GDP and an active form bound to GTP. Activated by a guanine nucleotide-exchange factor (GEF) and inactivated by a GTPase-activating protein (GAP). Functionally, ras proteins bind GDP/GTP and possess intrinsic GTPase activity. The chain is Ras-like protein RAS1 (RAS1) from Hydra vulgaris (Hydra).